The primary structure comprises 635 residues: MSEPIDWLPDGTPFNPRFGDRYHSHTGLAQAREVFLRGCGLPGAWAGQAMWRVLETGFGCGLNFLATWAAWRADPARPRLLHFVSCEAFPVSADDLLRSMQGHGELEPLARALHAQYWGLLPGVHRLAFEGGQVLLTLYIGDAQAMLRQQQPVADAVYLDGFSPQVNPELWDVHTLKAVARCCRRGTRLATWSVAGAVREGLAQCGFRVQKVPGLPPKRSNLQAEFDPAWEPRPVQPELPDVRVAGGPSSVLVIGGGLSGAAVAASLARRGWQVRVLDQGAEPAAGASGLPAGVFAPHVSPDDSLLSRLSRCGVRATLQALEASGLSEGEDWSACGVLEHEVDGKHRLPPAWAGDAAVGAEWSRPADAAALEAAGLPGATVAYWHARGGWLRPARLVRALLAHPGIHWQGRSAVARLEPVAAPGGATHWQAYGSDGTVLAEAPHVVVAAGYGSRPWLPARYPIHPLRGQVSWGTRADSPAAAWPPFPVNGHGNLVPHAGTAGGGIWVMGSTFERGQTELPPAPQEQAQAHAANAAKLEQLLPALAQGLAPAIAGPGAAPGHWAAVRCTAPDRLPFVGPVDAARQAGLWVCAAMGARGLTLSQLCGELLAARMMGEPLPVEVRLARALSTERLPAD.

Residues 1-227 (MSEPIDWLPD…KRSNLQAEFD (227 aa)) are tRNA (mnm(5)s(2)U34)-methyltransferase. The interval 254-635 (IGGGLSGAAV…ALSTERLPAD (382 aa)) is FAD-dependent cmnm(5)s(2)U34 oxidoreductase.

In the N-terminal section; belongs to the methyltransferase superfamily. tRNA (mnm(5)s(2)U34)-methyltransferase family. It in the C-terminal section; belongs to the DAO family. Requires FAD as cofactor.

The protein localises to the cytoplasm. The catalysed reaction is 5-aminomethyl-2-thiouridine(34) in tRNA + S-adenosyl-L-methionine = 5-methylaminomethyl-2-thiouridine(34) in tRNA + S-adenosyl-L-homocysteine + H(+). In terms of biological role, catalyzes the last two steps in the biosynthesis of 5-methylaminomethyl-2-thiouridine (mnm(5)s(2)U) at the wobble position (U34) in tRNA. Catalyzes the FAD-dependent demodification of cmnm(5)s(2)U34 to nm(5)s(2)U34, followed by the transfer of a methyl group from S-adenosyl-L-methionine to nm(5)s(2)U34, to form mnm(5)s(2)U34. The sequence is that of tRNA 5-methylaminomethyl-2-thiouridine biosynthesis bifunctional protein MnmC from Paracidovorax citrulli (strain AAC00-1) (Acidovorax citrulli).